The following is a 150-amino-acid chain: Phosphopantetheine adenylyltransferase (150 aa).

Position 10 (serine 10) interacts with substrate. Residues 10-11 (SF) and histidine 18 each bind ATP. Substrate-binding residues include lysine 42, threonine 74, and arginine 88. ATP contacts are provided by residues 89–91 (GLR), glutamate 99, and 124–130 (LAYISSS).

Belongs to the bacterial CoaD family. Homohexamer. Requires Mg(2+) as cofactor.

It localises to the cytoplasm. It carries out the reaction (R)-4'-phosphopantetheine + ATP + H(+) = 3'-dephospho-CoA + diphosphate. It functions in the pathway cofactor biosynthesis; coenzyme A biosynthesis; CoA from (R)-pantothenate: step 4/5. Reversibly transfers an adenylyl group from ATP to 4'-phosphopantetheine, yielding dephospho-CoA (dPCoA) and pyrophosphate. In Cytophaga hutchinsonii (strain ATCC 33406 / DSM 1761 / CIP 103989 / NBRC 15051 / NCIMB 9469 / D465), this protein is Phosphopantetheine adenylyltransferase.